Reading from the N-terminus, the 911-residue chain is Isoleucine--tRNA ligase (911 aa).

Residues 57-67 (PYANGHIHIGH) carry the 'HIGH' region motif. Residue glutamate 564 participates in L-isoleucyl-5'-AMP binding. The short motif at 605–609 (KMSKS) is the 'KMSKS' region element. An ATP-binding site is contributed by lysine 608. Cysteine 887, cysteine 890, cysteine 902, and cysteine 905 together coordinate Zn(2+).

Belongs to the class-I aminoacyl-tRNA synthetase family. IleS type 1 subfamily. As to quaternary structure, monomer. Zn(2+) is required as a cofactor.

It is found in the cytoplasm. It carries out the reaction tRNA(Ile) + L-isoleucine + ATP = L-isoleucyl-tRNA(Ile) + AMP + diphosphate. In terms of biological role, catalyzes the attachment of isoleucine to tRNA(Ile). As IleRS can inadvertently accommodate and process structurally similar amino acids such as valine, to avoid such errors it has two additional distinct tRNA(Ile)-dependent editing activities. One activity is designated as 'pretransfer' editing and involves the hydrolysis of activated Val-AMP. The other activity is designated 'posttransfer' editing and involves deacylation of mischarged Val-tRNA(Ile). The protein is Isoleucine--tRNA ligase of Nautilia profundicola (strain ATCC BAA-1463 / DSM 18972 / AmH).